The chain runs to 250 residues: tRNA (guanine-N(1)-)-methyltransferase (250 aa).

Residues Gly-115 and 135–140 (LGDFVL) contribute to the S-adenosyl-L-methionine site.

The protein belongs to the RNA methyltransferase TrmD family. As to quaternary structure, homodimer.

The protein localises to the cytoplasm. The enzyme catalyses guanosine(37) in tRNA + S-adenosyl-L-methionine = N(1)-methylguanosine(37) in tRNA + S-adenosyl-L-homocysteine + H(+). Functionally, specifically methylates guanosine-37 in various tRNAs. In Legionella pneumophila (strain Paris), this protein is tRNA (guanine-N(1)-)-methyltransferase.